We begin with the raw amino-acid sequence, 145 residues long: Endoribonuclease YbeY (145 aa).

3 residues coordinate Zn(2+): histidine 109, histidine 113, and histidine 119.

The protein belongs to the endoribonuclease YbeY family. It depends on Zn(2+) as a cofactor.

It localises to the cytoplasm. Its function is as follows. Single strand-specific metallo-endoribonuclease involved in late-stage 70S ribosome quality control and in maturation of the 3' terminus of the 16S rRNA. The protein is Endoribonuclease YbeY of Vesicomyosocius okutanii subsp. Calyptogena okutanii (strain HA).